We begin with the raw amino-acid sequence, 711 residues long: MTAIKGKLQELGAYVDEELPDYIMVMVANKKSQKQMTDDLSLFLGSNTTRFTTWLQGVLDKLRSVTPESNSMKTSDAIIFESSMPSLKSLSNSRDDLAKDVPTLTVSSTRHGRYDSSTSSHVQATGSSGSVARLTSAVKPLREFSPSEAVIDIKLDLDDPFNEDLSLATEIANLSRKRTALSASYRTLRPTAEVYRPPGIGQHAYHTNENNSSLHRFPQSSFVSGRSLKLQSSMTVGSSRIQDVSDLSETYKTAFRLASEKSLREEETSRKRRLPVASSVVKVKKLITDEEEVEEEGEEDEEGTDCIFRTAGISSSVSVPAKPERRPSLPPTKQANKNLILKAISEAQDCISKTTNYSTAAPQKQTVPVIPRSRLLPEEEQLMLLQNRSSLLNYPSHLQELQHQAMPEPLHKLDLLSRLQPNLEEEIELPNPVNSEEAEILRPLDSRSFILKRPKLSKEPSPQIQNNSVSPPCPAQPLPGRMIQPREAPTYEKPASPKFIVTLDGVPSPPGYISDQEVDESMCYTEQGETCVEQLGVVARPEQNYPMQLVTEPLCTNDVVMENTSSGTKEKIRERCKYWPACKNADSCAYHHPTSPCKSFPNCRFADKCFFIHPNCKYDAKCKKADCPFTHASKRFPVPPVKPVSTTSSSHPSSQPCRYFPACKKTDCSFYHPKHCRFNTQCTRPDCKFYHPAVSVPARHTLKWTRAQASD.

Disordered regions lie at residues 108 to 127 and 457 to 478; these read STRH…ATGS and SKEP…AQPL. Polar residues predominate over residues 460 to 470; it reads PSPQIQNNSVS. 5 consecutive C3H1-type zinc fingers follow at residues 570–595, 596–615, 616–631, 657–674, and 676–694; these read EKIR…HPTS, PCKS…IHPN, CKYD…PFTH, CRYF…YHPK, and CRFN…HPAV.

This sequence belongs to the ZC3H14 family. Homodimer; facilitating circular RNAs (circRNAs) formation.

The protein localises to the nucleus speckle. Its function is as follows. RNA-binding protein involved in the biogenesis of circular RNAs (circRNAs), which are produced by back-splicing circularization of pre-mRNAs. Acts by binding to both exon-intron boundary and 3'-UTR of pre-mRNAs to promote circRNA biogenesis through dimerization and the association with the spliceosome. Also binds the poly(A) tail of mRNAs; controlling poly(A) length. In Xenopus laevis (African clawed frog), this protein is Zinc finger CCCH domain-containing protein 14 (zc3h14).